The primary structure comprises 137 residues: Large ribosomal subunit protein uL16 (137 aa).

It belongs to the universal ribosomal protein uL16 family. Part of the 50S ribosomal subunit.

Functionally, binds 23S rRNA and is also seen to make contacts with the A and possibly P site tRNAs. The polypeptide is Large ribosomal subunit protein uL16 (Wolbachia pipientis subsp. Culex pipiens (strain wPip)).